The primary structure comprises 263 residues: Chorismate mutase 2 (263 aa).

In terms of domain architecture, Chorismate mutase spans 3–256; the sequence is CGDYDDKLSL…QVEYLLRRLD (254 aa).

In terms of assembly, homodimer. Expressed in root, stem, stigma, anther, leaf, petal tube, petal limb and sepal tissues with highest levels in petal tubes and stems.

The protein localises to the cytoplasm. It localises to the cytosol. The enzyme catalyses chorismate = prephenate. It participates in metabolic intermediate biosynthesis; prephenate biosynthesis; prephenate from chorismate: step 1/1. With respect to regulation, no allosteric regulation. Its function is as follows. Mediates the conversion of chorismate to prephenate. The chain is Chorismate mutase 2 from Petunia hybrida (Petunia).